A 193-amino-acid chain; its full sequence is MKKVQDFYFKKAKEENYKARSVFKLEEAQNKFKFIKASDNVLDVGCSPGSFSQYMLNKILKSGSVVGVDILPNSFAHQRFTFILGDIKDMDVTTFNNTLFDVVVSDAMPNTTSDRETNHFRSISLCRSIFDLAKEVLKENGNFFIKVFDGKDLQDFKKELSEYFNSVNVFKPKSSRDESREIFLFCKNFKKLR.

S-adenosyl-L-methionine-binding residues include Gly49, Phe51, Asp69, Asp86, and Asp106. The active-site Proton acceptor is Lys146.

It belongs to the class I-like SAM-binding methyltransferase superfamily. RNA methyltransferase RlmE family.

It is found in the cytoplasm. The catalysed reaction is uridine(2552) in 23S rRNA + S-adenosyl-L-methionine = 2'-O-methyluridine(2552) in 23S rRNA + S-adenosyl-L-homocysteine + H(+). Specifically methylates the uridine in position 2552 of 23S rRNA at the 2'-O position of the ribose in the fully assembled 50S ribosomal subunit. This chain is Ribosomal RNA large subunit methyltransferase E, found in Brachyspira hyodysenteriae (strain ATCC 49526 / WA1).